We begin with the raw amino-acid sequence, 241 residues long: Demethylmenaquinone methyltransferase (241 aa).

Residues threonine 60, aspartate 81, and 106–107 each bind S-adenosyl-L-methionine; that span reads DA.

Belongs to the class I-like SAM-binding methyltransferase superfamily. MenG/UbiE family.

The catalysed reaction is a 2-demethylmenaquinol + S-adenosyl-L-methionine = a menaquinol + S-adenosyl-L-homocysteine + H(+). It functions in the pathway quinol/quinone metabolism; menaquinone biosynthesis; menaquinol from 1,4-dihydroxy-2-naphthoate: step 2/2. Functionally, methyltransferase required for the conversion of demethylmenaquinol (DMKH2) to menaquinol (MKH2). The chain is Demethylmenaquinone methyltransferase from Staphylococcus carnosus (strain TM300).